The following is a 479-amino-acid chain: MSPQTETKAGVGFQAGVKDYKLTYYTPEYETKDTDILAAFRVSPQPGVPPEEAGAAVAAESSTGTWTTVWTDGLTSLDRYKGRCYHIEPVAGEDSQWICYVAYPLDLFEEGSVTNMFTSIVGNVFGFKALRALRLEDLRIPPTYSKTFQGPPHGIQVERDKLNKYGRPLLGCTIKPKLGLSAKNYGRACYECLRGGLDFTKDDENVNSQPFMRWRDRFVFCAEAIYKSQAETGEIKGHYLNATAGTCEEMIKRAVFARELGVPIVMHDYLTGGFTANTTLAHYCRDNGLLLHIHRAMHAVIDRQKNHGMHFRVLAKALRMSGGDHIHSGTVVGKLEGEREMTLGFVDLLRDDFIEKDRARGIFFTQDWVSMPGVIPVASGGIHVWHMPALTEIFGDDSVLQFGGGTLGHPWGNAPGAAANRVALEACVQARNEGRDLAREGNEIIRAACKWSPELAAACEVWKAIKFEFEPVDTIDKKV.

Residues Met1–Ser2 constitute a propeptide that is removed on maturation. The residue at position 3 (Pro3) is an N-acetylproline. Residues Asn123 and Thr173 each contribute to the substrate site. Catalysis depends on Lys175, which acts as the Proton acceptor. Lys177 lines the substrate pocket. The Mg(2+) site is built by Lys201, Asp203, and Glu204. Lys201 carries the N6-carboxylysine modification. Catalysis depends on His294, which acts as the Proton acceptor. Residues Arg295, His327, and Ser379 each contribute to the substrate site.

Belongs to the RuBisCO large chain family. Type I subfamily. In terms of assembly, heterohexadecamer of 8 large chains and 8 small chains; disulfide-linked. The disulfide link is formed within the large subunit homodimers. Mg(2+) serves as cofactor. In terms of processing, the disulfide bond which can form in the large chain dimeric partners within the hexadecamer appears to be associated with oxidative stress and protein turnover.

The protein localises to the plastid. It localises to the chloroplast. The catalysed reaction is 2 (2R)-3-phosphoglycerate + 2 H(+) = D-ribulose 1,5-bisphosphate + CO2 + H2O. It carries out the reaction D-ribulose 1,5-bisphosphate + O2 = 2-phosphoglycolate + (2R)-3-phosphoglycerate + 2 H(+). Functionally, ruBisCO catalyzes two reactions: the carboxylation of D-ribulose 1,5-bisphosphate, the primary event in carbon dioxide fixation, as well as the oxidative fragmentation of the pentose substrate in the photorespiration process. Both reactions occur simultaneously and in competition at the same active site. The sequence is that of Ribulose bisphosphate carboxylase large chain from Hordeum vulgare (Barley).